A 103-amino-acid chain; its full sequence is Cytochrome c-552 (103 aa).

Residues 1–22 (MKTAWLGTFAASALLVAGYAQA) form the signal peptide. Positions 32, 35, 36, and 81 each coordinate heme c.

In terms of assembly, monomer. Post-translationally, binds 1 heme c group covalently per subunit.

It localises to the periplasm. Functionally, monoheme c-type cytochrome. Probable electron donor to membrane cytochrome oxidase and to periplasmic nitrite reductase. This Nitrosomonas europaea (strain ATCC 19718 / CIP 103999 / KCTC 2705 / NBRC 14298) protein is Cytochrome c-552 (cyt).